A 101-amino-acid polypeptide reads, in one-letter code: Urease subunit beta (101 aa).

The protein belongs to the urease beta subunit family. Heterotrimer of UreA (gamma), UreB (beta) and UreC (alpha) subunits. Three heterotrimers associate to form the active enzyme.

The protein resides in the cytoplasm. The enzyme catalyses urea + 2 H2O + H(+) = hydrogencarbonate + 2 NH4(+). It participates in nitrogen metabolism; urea degradation; CO(2) and NH(3) from urea (urease route): step 1/1. This chain is Urease subunit beta, found in Actinobacillus pleuropneumoniae serotype 5b (strain L20).